A 380-amino-acid polypeptide reads, in one-letter code: Cytochrome b (380 aa).

A run of 4 helical transmembrane segments spans residues 34 to 54 (FGSL…LLAA), 78 to 99 (WLIR…YLHI), 114 to 134 (WNTG…GYVL), and 179 to 199 (FFAL…IHLA). Heme b is bound by residues H84 and H98. Heme b contacts are provided by H183 and H197. H202 contributes to the a ubiquinone binding site. 4 helical membrane-spanning segments follow: residues 227–247 (LKDI…ALFS), 289–309 (LGGV…PLLH), 321–341 (LSQL…WIGS), and 348–368 (FIII…ILFP).

It belongs to the cytochrome b family. As to quaternary structure, the cytochrome bc1 complex contains 11 subunits: 3 respiratory subunits (MT-CYB, CYC1 and UQCRFS1), 2 core proteins (UQCRC1 and UQCRC2) and 6 low-molecular weight proteins (UQCRH/QCR6, UQCRB/QCR7, UQCRQ/QCR8, UQCR10/QCR9, UQCR11/QCR10 and a cleavage product of UQCRFS1). This cytochrome bc1 complex then forms a dimer. Requires heme b as cofactor.

It is found in the mitochondrion inner membrane. Its function is as follows. Component of the ubiquinol-cytochrome c reductase complex (complex III or cytochrome b-c1 complex) that is part of the mitochondrial respiratory chain. The b-c1 complex mediates electron transfer from ubiquinol to cytochrome c. Contributes to the generation of a proton gradient across the mitochondrial membrane that is then used for ATP synthesis. The polypeptide is Cytochrome b (MT-CYB) (Cyrtonyx montezumae (Montezuma quail)).